Reading from the N-terminus, the 371-residue chain is RT1 class I histocompatibility antigen, AA alpha chain (371 aa).

Positions 1–24 (MEAMAPRTLLLLLAAALAPTQTRA) are cleaved as a signal peptide. The interval 25 to 114 (GSHSLRYFYT…LRGYYNQSEG (90 aa)) is alpha-1. The Extracellular portion of the chain corresponds to 25 to 311 (GSHSLRYFYT…PSTDSNMETT (287 aa)). An N-linked (GlcNAc...) asparagine glycan is attached at Asn110. The segment at 115 to 206 (GSHTIQEMYG…ELGKETLLRS (92 aa)) is alpha-2. The tract at residues 207 to 298 (DPPEAHVTLH…GLPKPLSQRW (92 aa)) is alpha-3. The 87-residue stretch at 209–295 (PEAHVTLHPR…EHEGLPKPLS (87 aa)) folds into the Ig-like C1-type domain. N-linked (GlcNAc...) asparagine glycosylation occurs at Asn280. Residues 299 to 311 (EPSPSTDSNMETT) are connecting peptide. A helical transmembrane segment spans residues 312 to 336 (VIYVILGAVAMIGAVAIIGAMVAVV). Over 337 to 371 (RRRKRNTGGKGGDYAPAPGRDSSQSSDVSLPDCKA) the chain is Cytoplasmic. The segment at 342 to 371 (NTGGKGGDYAPAPGRDSSQSSDVSLPDCKA) is disordered. A phosphoserine mark is found at Ser362 and Ser365.

Belongs to the MHC class I family. As to quaternary structure, heterodimer of an alpha chain and a beta chain (beta-2-microglobulin).

It localises to the membrane. Its function is as follows. Involved in the presentation of foreign antigens to the immune system. This Rattus norvegicus (Rat) protein is RT1 class I histocompatibility antigen, AA alpha chain.